Here is a 246-residue protein sequence, read N- to C-terminus: Small ribosomal subunit protein uS2 (246 aa).

It belongs to the universal ribosomal protein uS2 family.

The sequence is that of Small ribosomal subunit protein uS2 from Dictyoglomus turgidum (strain DSM 6724 / Z-1310).